The following is a 90-amino-acid chain: ATP-dependent Clp protease adapter protein ClpS (90 aa).

Belongs to the ClpS family. In terms of assembly, binds to the N-terminal domain of the chaperone ClpA.

Functionally, involved in the modulation of the specificity of the ClpAP-mediated ATP-dependent protein degradation. In Helicobacter pylori (strain J99 / ATCC 700824) (Campylobacter pylori J99), this protein is ATP-dependent Clp protease adapter protein ClpS.